A 588-amino-acid polypeptide reads, in one-letter code: Calicin (588 aa).

Residues 28–98 form the BTB domain; sequence WDMALTVDHH…FYSGKVVISE (71 aa). The BACK domain occupies 133–235; it reads CLRYLFLAEL…NAVSNKTLMF (103 aa). Phosphoserine is present on Ser149. Kelch repeat units lie at residues 280–327, 328–375, 377–423, 425–475, 476–525, and 526–580; these read SVVI…AAGR, YIYI…TCGG, VYSV…TKGD, NLYI…SFHQ, DNIL…IGDS, and KVFV…LAKL.

In terms of assembly, interacts with CYLC1; the interaction may be relevant for proper acrosome attachment to the nuclear envelope.

The protein localises to the cytoplasm. Its subcellular location is the cytoskeleton. It is found in the perinuclear theca. The protein resides in the calyx. Required for both nuclear and acrosomal shaping during spermiogenesis. The protein is Calicin (Ccin) of Rattus norvegicus (Rat).